A 294-amino-acid chain; its full sequence is 4-hydroxy-tetrahydrodipicolinate synthase (294 aa).

Serine 47 contacts pyruvate. Tyrosine 135 (proton donor/acceptor) is an active-site residue. Residue lysine 163 is the Schiff-base intermediate with substrate of the active site. Residue isoleucine 205 coordinates pyruvate.

The protein belongs to the DapA family. In terms of assembly, homotetramer; dimer of dimers.

It localises to the cytoplasm. The enzyme catalyses L-aspartate 4-semialdehyde + pyruvate = (2S,4S)-4-hydroxy-2,3,4,5-tetrahydrodipicolinate + H2O + H(+). Its pathway is amino-acid biosynthesis; L-lysine biosynthesis via DAP pathway; (S)-tetrahydrodipicolinate from L-aspartate: step 3/4. Its function is as follows. Catalyzes the condensation of (S)-aspartate-beta-semialdehyde [(S)-ASA] and pyruvate to 4-hydroxy-tetrahydrodipicolinate (HTPA). This chain is 4-hydroxy-tetrahydrodipicolinate synthase, found in Ralstonia nicotianae (strain ATCC BAA-1114 / GMI1000) (Ralstonia solanacearum).